Consider the following 273-residue polypeptide: UPF0173 metal-dependent hydrolase Bpro_4324 (273 aa).

It belongs to the UPF0173 family.

This Polaromonas sp. (strain JS666 / ATCC BAA-500) protein is UPF0173 metal-dependent hydrolase Bpro_4324.